Consider the following 95-residue polypeptide: UPF0235 protein Pcar_0617 (95 aa).

The protein belongs to the UPF0235 family.

This Syntrophotalea carbinolica (strain DSM 2380 / NBRC 103641 / GraBd1) (Pelobacter carbinolicus) protein is UPF0235 protein Pcar_0617.